The sequence spans 457 residues: MERAMERQKILLRHLNPVSSSNSSLKHEPSLLSPVNCVSEVSPMAAFGDDIVIVAAYRTAICKARRGGFKDTLPDDLLASVLKAVVERTSLDPSEVGDIVVGTVIAPGSQRAMECRVAAYFAGFPDSVPVRTVNRQCSSGLQAVADVAASIRAGYYDIGIGAGVESMSTDHIPGGGFHGSNPRAQDFPKARDCLLPMGITSENVAERFGVTREEQDMAAVESHKRAAAAIASGKLKDEIIPVATKIVDPETKAEKAIVVSVDDGVRPNSNMADLAKLKTVFKQNGSTTAGNASQISDGAGAVLLMKRSLAMKKGLPILGVFRSFAVTGVEPSVMGIGPAVAIPAATKLAGLNVSDIDLFEINEAFASQYVYSCKKLELDMEKVNVNGGAIAIGHPLGATGARCVATLLHEMKRRGKDCRFGVISMCIGTGMGAAAVFERGDSVDNLSNARVANGDSH.

Residues 1–37 (MERAMERQKILLRHLNPVSSSNSSLKHEPSLLSPVNC) constitute a peroxisome transit peptide. Cys137 serves as the catalytic Acyl-thioester intermediate. Catalysis depends on proton acceptor residues His394 and Cys426.

Belongs to the thiolase-like superfamily. Thiolase family. Homodimer. Expressed in seedlings and wounded leaves.

The protein resides in the peroxisome. It carries out the reaction an acyl-CoA + acetyl-CoA = a 3-oxoacyl-CoA + CoA. It functions in the pathway lipid metabolism; fatty acid metabolism. Its function is as follows. Probably involved in long chain fatty-acid beta-oxidation prior to gluconeogenesis during germination and subsequent seedling growth. Involved in systemic jasmonic acid (JA) biosynthesis after wounding and may be during senescence. The polypeptide is 3-ketoacyl-CoA thiolase 5, peroxisomal (KAT5) (Arabidopsis thaliana (Mouse-ear cress)).